The following is a 58-amino-acid chain: Small ribosomal subunit protein bS21C (58 aa).

The tract at residues 38–58 (YEKPSLRRKRKAEAARKGGRY) is disordered. The segment covering 49-58 (AEAARKGGRY) has biased composition (basic and acidic residues).

This sequence belongs to the bacterial ribosomal protein bS21 family.

The polypeptide is Small ribosomal subunit protein bS21C (rpsU3) (Nostoc sp. (strain PCC 7120 / SAG 25.82 / UTEX 2576)).